The primary structure comprises 203 residues: DNA-binding transcriptional repressor ScoC (203 aa).

The 145-residue stretch at 13-157 (ALVFTQKMAQ…MMCMIRHIYG (145 aa)) folds into the HTH marR-type domain. Residues 63–86 (ISEIAKFGVMHVSTAFNFSKKLEE) constitute a DNA-binding region (H-T-H motif). A disordered region spans residues 183–203 (KKKAKDSAADEPAEELEPVNS). A compositionally biased stretch (acidic residues) spans 191–203 (ADEPAEELEPVNS).

As to quaternary structure, homodimer. Interacts with SinR.

In terms of biological role, negative regulator of protease production and sporulation. Acts by binding directly to the promoter of protease genes (aprE and nprE), and by repressing oligopeptide permease operons (appABCDF and oppABCDF), thereby preventing uptake of oligopeptides required for initiation of sporulation. Acts with SinR as a corepressor of epr expression. Binds to non-m6A-5-methylated 5'-GACGAG-3' sites, tested with scpA; when the target is methylated by DnmA, this repressor no longer binds and transcription is up-regulated. The sequence is that of DNA-binding transcriptional repressor ScoC from Bacillus subtilis (strain 168).